The sequence spans 173 residues: ATP synthase subunit b (173 aa).

The helical transmembrane segment at 12 to 32 threads the bilayer; sequence LDVNPGLVVWTLVTFLVVVLV.

The protein belongs to the ATPase B chain family. As to quaternary structure, F-type ATPases have 2 components, F(1) - the catalytic core - and F(0) - the membrane proton channel. F(1) has five subunits: alpha(3), beta(3), gamma(1), delta(1), epsilon(1). F(0) has three main subunits: a(1), b(2) and c(10-14). The alpha and beta chains form an alternating ring which encloses part of the gamma chain. F(1) is attached to F(0) by a central stalk formed by the gamma and epsilon chains, while a peripheral stalk is formed by the delta and b chains.

Its subcellular location is the cell inner membrane. F(1)F(0) ATP synthase produces ATP from ADP in the presence of a proton or sodium gradient. F-type ATPases consist of two structural domains, F(1) containing the extramembraneous catalytic core and F(0) containing the membrane proton channel, linked together by a central stalk and a peripheral stalk. During catalysis, ATP synthesis in the catalytic domain of F(1) is coupled via a rotary mechanism of the central stalk subunits to proton translocation. In terms of biological role, component of the F(0) channel, it forms part of the peripheral stalk, linking F(1) to F(0). In Leptospira interrogans serogroup Icterohaemorrhagiae serovar copenhageni (strain Fiocruz L1-130), this protein is ATP synthase subunit b.